The primary structure comprises 258 residues: GPI alpha-1,4-mannosyltransferase I, stabilizing subunit (258 aa).

The first 21 residues, 1-21 (MAARVAAVRAAAWLLLGAATG), serve as a signal peptide directing secretion. Residues 22 to 230 (LTRGPAAAFT…PVGLTVHTSL (209 aa)) are Lumenal-facing. Asn103 is a glycosylation site (N-linked (GlcNAc...) asparagine). The chain crosses the membrane as a helical span at residues 231–251 (VCSVTLLITILCSTLILVAVF). At 252-258 (KYGHFSL) the chain is on the cytoplasmic side.

The protein belongs to the PIGX family. Part of the glycosylphosphatidylinositol-mannosyltransferase I complex that is composed of PIGM and PIGX. Interacts with PIGM; PIGX stabilizes PIGM.

It is found in the endoplasmic reticulum membrane. It functions in the pathway glycolipid biosynthesis; glycosylphosphatidylinositol-anchor biosynthesis. Stabilizing subunit of the glycosylphosphatidylinositol-mannosyltransferase I complex which catalyzes the transfer of the first mannose, via an alpha-1,4 bond from a dolichol-phosphate-mannose (Dol-P-Man) to the glucosaminyl acyl phosphatidylinositol (GlcN-(acyl)PI) intermediate to generate alpha-D-Man-(1-&gt;4)-alpha-D-GlcN-(1-&gt;6)-(1-radyl,2-acyl-sn-glycero-3-phospho)-2-acyl-inositol and participates in the sixth step of the glycosylphosphatidylinositol-anchor biosynthesis. Probably acts by stabilizing the mannosyltransferase PIGM. The polypeptide is GPI alpha-1,4-mannosyltransferase I, stabilizing subunit (Homo sapiens (Human)).